Consider the following 149-residue polypeptide: Arginine regulator (149 aa).

It belongs to the ArgR family.

The protein resides in the cytoplasm. The protein operates within amino-acid degradation; L-arginine degradation via ADI pathway. Functionally, regulates the transcription of the arc operon, involved in arginine catabolism. This is Arginine regulator (argR1) from Bacillus thuringiensis subsp. konkukian (strain 97-27).